Reading from the N-terminus, the 259-residue chain is Leucyl/phenylalanyl-tRNA--protein transferase (259 aa).

Belongs to the L/F-transferase family.

The protein localises to the cytoplasm. The catalysed reaction is N-terminal L-lysyl-[protein] + L-leucyl-tRNA(Leu) = N-terminal L-leucyl-L-lysyl-[protein] + tRNA(Leu) + H(+). It catalyses the reaction N-terminal L-arginyl-[protein] + L-leucyl-tRNA(Leu) = N-terminal L-leucyl-L-arginyl-[protein] + tRNA(Leu) + H(+). It carries out the reaction L-phenylalanyl-tRNA(Phe) + an N-terminal L-alpha-aminoacyl-[protein] = an N-terminal L-phenylalanyl-L-alpha-aminoacyl-[protein] + tRNA(Phe). Functions in the N-end rule pathway of protein degradation where it conjugates Leu, Phe and, less efficiently, Met from aminoacyl-tRNAs to the N-termini of proteins containing an N-terminal arginine or lysine. In Teredinibacter turnerae (strain ATCC 39867 / T7901), this protein is Leucyl/phenylalanyl-tRNA--protein transferase.